The sequence spans 225 residues: Small ribosomal subunit protein uS3 (225 aa).

Positions L38 to R106 constitute a KH type-2 domain.

It belongs to the universal ribosomal protein uS3 family. In terms of assembly, part of the 30S ribosomal subunit. Forms a tight complex with proteins S10 and S14.

Its function is as follows. Binds the lower part of the 30S subunit head. Binds mRNA in the 70S ribosome, positioning it for translation. The protein is Small ribosomal subunit protein uS3 of Rhodospirillum centenum (strain ATCC 51521 / SW).